The following is a 90-amino-acid chain: UPF0367 protein P9301_01411 (90 aa).

This sequence belongs to the UPF0367 family.

This chain is UPF0367 protein P9301_01411, found in Prochlorococcus marinus (strain MIT 9301).